We begin with the raw amino-acid sequence, 156 residues long: Peptide deformylase 1 (156 aa).

Fe cation is bound by residues Cys90 and His132. Glu133 is an active-site residue. His136 contacts Fe cation.

The protein belongs to the polypeptide deformylase family. Requires Fe(2+) as cofactor.

It carries out the reaction N-terminal N-formyl-L-methionyl-[peptide] + H2O = N-terminal L-methionyl-[peptide] + formate. Functionally, removes the formyl group from the N-terminal Met of newly synthesized proteins. Requires at least a dipeptide for an efficient rate of reaction. N-terminal L-methionine is a prerequisite for activity but the enzyme has broad specificity at other positions. This is Peptide deformylase 1 from Bacillus cereus (strain ATCC 14579 / DSM 31 / CCUG 7414 / JCM 2152 / NBRC 15305 / NCIMB 9373 / NCTC 2599 / NRRL B-3711).